The chain runs to 1872 residues: Ral GTPase-activating protein subunit alpha-2 (1872 aa).

The interval 350 to 370 (DGAGSTEQDKSHSNSSTLSDR) is disordered. Phosphoserine is present on residues serine 373, serine 376, and serine 379. Residues 445–469 (PDKKDVAQEDADKLGLSETDSKEAS) are compositionally biased toward basic and acidic residues. A disordered region spans residues 445-481 (PDKKDVAQEDADKLGLSETDSKEASSESSGHKRSSSW). Residue serine 486 is modified to Phosphoserine. Serine 696 carries the phosphoserine; by PKB modification. 2 disordered regions span residues 711–730 (FRSA…NTVR) and 758–813 (QQVP…GITM). Threonine 715 carries the post-translational modification Phosphothreonine; by PKB. Composition is skewed to polar residues over residues 758 to 768 (QQVPRSSSTSD) and 775 to 795 (SDSS…SEPK). The span at 796-810 (SVQESKGHVTHEHEG) shows a compositional bias: basic and acidic residues. 2 positions are modified to phosphoserine: serine 819 and serine 820. Residues 831 to 851 (QQAHGRCRQRQTSESTGSDTV) are disordered. Positions 840-849 (RQTSESTGSD) are enriched in polar residues. Serine 1592 carries the phosphoserine modification. Positions 1634 to 1842 (LKNLDSRQCR…EERALYLEAI (209 aa)) constitute a Rap-GAP domain.

In terms of assembly, component of the heterodimeric RalGAP2 complex with RALGAPB. Heterodimerization is required for activity. Abundantly expressed in testis, pancreas, lung, thymus, brown fat, and white fat.

The protein localises to the cytoplasm. Catalytic subunit of the heterodimeric RalGAP2 complex which acts as a GTPase activator for the Ras-like small GTPases RALA and RALB. This is Ral GTPase-activating protein subunit alpha-2 (Ralgapa2) from Mus musculus (Mouse).